Consider the following 291-residue polypeptide: MASLKDMRVRIASTKATQKITKAMQMVAASKLRRAQMAAEAARPYAEKMEAVISNIAGAAAGSPGAPVLLAGNGKDQVHLLLVCTGERGLSGAFNSSIVRLARERAYELMSQGKTVKFFCVGRKGYEQLRRNFEKQIIDNVELRSVRQIGFVNAEDIAKKVIARFNAGEFDVCTLFYSRFKSVISQIPTAQQLIPLEVTAPAAGTVATSYEYEPEEDEILSGLLPRNLAVQIFRALLENNASFYGAQMSAMDNATRNAGEMIRKQTLVYNRTRQAMITKELIEIISGAEAI.

It belongs to the ATPase gamma chain family. As to quaternary structure, F-type ATPases have 2 components, CF(1) - the catalytic core - and CF(0) - the membrane proton channel. CF(1) has five subunits: alpha(3), beta(3), gamma(1), delta(1), epsilon(1). CF(0) has three main subunits: a, b and c.

Its subcellular location is the cell inner membrane. Produces ATP from ADP in the presence of a proton gradient across the membrane. The gamma chain is believed to be important in regulating ATPase activity and the flow of protons through the CF(0) complex. This is ATP synthase gamma chain from Rhodopseudomonas palustris (strain ATCC BAA-98 / CGA009).